A 188-amino-acid polypeptide reads, in one-letter code: FMN reductase (NADH) RutF (188 aa).

Belongs to the non-flavoprotein flavin reductase family. RutF subfamily.

The catalysed reaction is FMNH2 + NAD(+) = FMN + NADH + 2 H(+). Functionally, catalyzes the reduction of FMN to FMNH2 which is used to reduce pyrimidine by RutA via the Rut pathway. The sequence is that of FMN reductase (NADH) RutF from Acinetobacter baylyi (strain ATCC 33305 / BD413 / ADP1).